A 368-amino-acid chain; its full sequence is Cobalt-precorrin-5B C(1)-methyltransferase (368 aa).

Belongs to the CbiD family.

The enzyme catalyses Co-precorrin-5B + S-adenosyl-L-methionine = Co-precorrin-6A + S-adenosyl-L-homocysteine. The protein operates within cofactor biosynthesis; adenosylcobalamin biosynthesis; cob(II)yrinate a,c-diamide from sirohydrochlorin (anaerobic route): step 6/10. In terms of biological role, catalyzes the methylation of C-1 in cobalt-precorrin-5B to form cobalt-precorrin-6A. This is Cobalt-precorrin-5B C(1)-methyltransferase from Brucella canis (strain ATCC 23365 / NCTC 10854 / RM-666).